Reading from the N-terminus, the 340-residue chain is S-adenosylmethionine:tRNA ribosyltransferase-isomerase (340 aa).

Belongs to the QueA family. Monomer.

It is found in the cytoplasm. It catalyses the reaction 7-aminomethyl-7-carbaguanosine(34) in tRNA + S-adenosyl-L-methionine = epoxyqueuosine(34) in tRNA + adenine + L-methionine + 2 H(+). It functions in the pathway tRNA modification; tRNA-queuosine biosynthesis. Functionally, transfers and isomerizes the ribose moiety from AdoMet to the 7-aminomethyl group of 7-deazaguanine (preQ1-tRNA) to give epoxyqueuosine (oQ-tRNA). This Macrococcus caseolyticus (strain JCSC5402) (Macrococcoides caseolyticum) protein is S-adenosylmethionine:tRNA ribosyltransferase-isomerase.